A 215-amino-acid polypeptide reads, in one-letter code: Large ribosomal subunit protein uL1 (215 aa).

It belongs to the universal ribosomal protein uL1 family. Part of the 50S ribosomal subunit.

Binds directly to 23S rRNA. Probably involved in E site tRNA release. Functionally, protein L1 is also a translational repressor protein, it controls the translation of its operon by binding to its mRNA. The protein is Large ribosomal subunit protein uL1 of Cenarchaeum symbiosum (strain A).